The primary structure comprises 105 residues: uncharacterized protein (105 aa).

A Helicase C-terminal domain is found at 2–42 (QVLIGTKLVTEGIDIKQLMMVIMLDNRLNIIELIQGVGRLR).

This sequence belongs to the helicase family. Yeast subtelomeric Y' repeat subfamily.

This is an uncharacterized protein from Saccharomyces cerevisiae (strain ATCC 204508 / S288c) (Baker's yeast).